The sequence spans 212 residues: Glycerol-3-phosphate acyltransferase (212 aa).

4 helical membrane-spanning segments follow: residues 3-23, 78-98, 115-135, and 155-177; these read ILLAALVAYLIGSVSFAVVVS, DVAVAWVAIAVFLGHLYPVFF, AVHPVLGLATALTWLIVAFFF, and FLFGTGHNPVAWAVLAMSVLLVW.

This sequence belongs to the PlsY family. In terms of assembly, probably interacts with PlsX.

It localises to the cell inner membrane. It carries out the reaction an acyl phosphate + sn-glycerol 3-phosphate = a 1-acyl-sn-glycero-3-phosphate + phosphate. Its pathway is lipid metabolism; phospholipid metabolism. Catalyzes the transfer of an acyl group from acyl-phosphate (acyl-PO(4)) to glycerol-3-phosphate (G3P) to form lysophosphatidic acid (LPA). This enzyme utilizes acyl-phosphate as fatty acyl donor, but not acyl-CoA or acyl-ACP. In Burkholderia lata (strain ATCC 17760 / DSM 23089 / LMG 22485 / NCIMB 9086 / R18194 / 383), this protein is Glycerol-3-phosphate acyltransferase.